A 103-amino-acid polypeptide reads, in one-letter code: Endoribonuclease MazF3 (103 aa).

The protein belongs to the PemK/MazF family. In terms of assembly, forms a complex with cognate antitoxin MazE3.

Its function is as follows. Toxic component of a type II toxin-antitoxin (TA) system. Acts as an endoribonuclease, cleaving in U-rich regions. Neutralized by cognate antitoxin MazE3. The sequence is that of Endoribonuclease MazF3 (mazF3) from Mycobacterium tuberculosis (strain CDC 1551 / Oshkosh).